The following is a 363-amino-acid chain: Putative lipoate-protein ligase A (363 aa).

Residues 49–229 enclose the BPL/LPL catalytic domain; the sequence is STAKHCLLLY…CFLLHKSHST (181 aa). Residues Arg-91, 96–99, and Lys-152 contribute to the ATP site; that span reads GTVF. Lys-152 is a (R)-lipoate binding site.

Belongs to the LplA family. Monomer.

The protein localises to the cytoplasm. It catalyses the reaction L-lysyl-[lipoyl-carrier protein] + (R)-lipoate + ATP = N(6)-[(R)-lipoyl]-L-lysyl-[lipoyl-carrier protein] + AMP + diphosphate + H(+). It participates in protein modification; protein lipoylation via exogenous pathway; protein N(6)-(lipoyl)lysine from lipoate: step 1/2. Its pathway is protein modification; protein lipoylation via exogenous pathway; protein N(6)-(lipoyl)lysine from lipoate: step 2/2. Functionally, catalyzes both the ATP-dependent activation of exogenously supplied lipoate to lipoyl-AMP and the transfer of the activated lipoyl onto the lipoyl domains of lipoate-dependent enzymes. This chain is Putative lipoate-protein ligase A (aim22), found in Schizosaccharomyces pombe (strain 972 / ATCC 24843) (Fission yeast).